Here is a 205-residue protein sequence, read N- to C-terminus: Holliday junction branch migration complex subunit RuvA (205 aa).

Residues 1 to 62 form a domain I region; sequence MFEYVTGYVE…EDIMALYGFK (62 aa). The segment at 63 to 141 is domain II; it reads TREERLLFTK…DVVPDAFVDL (79 aa). The tract at residues 142–152 is flexible linker; sequence FSDTESFDTKK. Residues 153–205 are domain III; it reads GSSVELDEALEALRALGYAEREVSRVVPELLKESLTTDQYIKKALSLLLNGKR.

Belongs to the RuvA family. As to quaternary structure, homotetramer. Forms an RuvA(8)-RuvB(12)-Holliday junction (HJ) complex. HJ DNA is sandwiched between 2 RuvA tetramers; dsDNA enters through RuvA and exits via RuvB. An RuvB hexamer assembles on each DNA strand where it exits the tetramer. Each RuvB hexamer is contacted by two RuvA subunits (via domain III) on 2 adjacent RuvB subunits; this complex drives branch migration. In the full resolvosome a probable DNA-RuvA(4)-RuvB(12)-RuvC(2) complex forms which resolves the HJ.

It localises to the cytoplasm. The RuvA-RuvB-RuvC complex processes Holliday junction (HJ) DNA during genetic recombination and DNA repair, while the RuvA-RuvB complex plays an important role in the rescue of blocked DNA replication forks via replication fork reversal (RFR). RuvA specifically binds to HJ cruciform DNA, conferring on it an open structure. The RuvB hexamer acts as an ATP-dependent pump, pulling dsDNA into and through the RuvAB complex. HJ branch migration allows RuvC to scan DNA until it finds its consensus sequence, where it cleaves and resolves the cruciform DNA. In Bacillus mycoides (strain KBAB4) (Bacillus weihenstephanensis), this protein is Holliday junction branch migration complex subunit RuvA.